We begin with the raw amino-acid sequence, 344 residues long: Nuclear distribution protein nudE-like 1-B (344 aa).

Residues 26 to 189 (YKKSCHDAQE…ELAVRERTSD (164 aa)) adopt a coiled-coil conformation.

This sequence belongs to the nudE family. Phosphorylated in mitosis.

The protein localises to the cytoplasm. The protein resides in the cytoskeleton. It is found in the microtubule organizing center. Its subcellular location is the centrosome. It localises to the spindle. Its function is as follows. Required for organization of the cellular microtubule array and microtubule anchoring at the centrosome. Positively regulates the activity of the minus-end directed microtubule motor protein dynein. May enhance dynein-mediated microtubule sliding by targeting dynein to the microtubule plus end. The polypeptide is Nuclear distribution protein nudE-like 1-B (ndel1b) (Danio rerio (Zebrafish)).